The chain runs to 164 residues: Large ribosomal subunit protein eL24z (164 aa).

A compositionally biased stretch (basic and acidic residues) spans 117 to 133 (ERIKKTKDEKKAKKVEY). A disordered region spans residues 117-164 (ERIKKTKDEKKAKKVEYASKQQKSQVKGNIPKSAAPKAAKMGGGGGRR).

The protein belongs to the eukaryotic ribosomal protein eL24 family. Interacts with the cauliflower mosaic virus transactivator TAV to form a TAV/60S complex. Interacts with REIL1 AND REIL2.

Functionally, might have an extraribosomal function in reinitiation of translation. The protein is Large ribosomal subunit protein eL24z (RPL24A) of Arabidopsis thaliana (Mouse-ear cress).